A 433-amino-acid polypeptide reads, in one-letter code: Glucose-1-phosphate adenylyltransferase (433 aa).

Residues Tyr-117, Gly-182, 197 to 198, and Ser-215 contribute to the alpha-D-glucose 1-phosphate site; that span reads EK.

Belongs to the bacterial/plant glucose-1-phosphate adenylyltransferase family. As to quaternary structure, homotetramer.

It carries out the reaction alpha-D-glucose 1-phosphate + ATP + H(+) = ADP-alpha-D-glucose + diphosphate. It participates in glycan biosynthesis; glycogen biosynthesis. Functionally, involved in the biosynthesis of ADP-glucose, a building block required for the elongation reactions to produce glycogen. Catalyzes the reaction between ATP and alpha-D-glucose 1-phosphate (G1P) to produce pyrophosphate and ADP-Glc. In Nitrosomonas europaea (strain ATCC 19718 / CIP 103999 / KCTC 2705 / NBRC 14298), this protein is Glucose-1-phosphate adenylyltransferase.